Reading from the N-terminus, the 436-residue chain is GTPase Der (436 aa).

EngA-type G domains follow at residues 4 to 167 and 176 to 351; these read PVVA…PKEE and VKFS…DNHS. Residues 10–17, 57–61, 119–122, 182–189, 229–233, and 294–297 each bind GTP; these read GRPNVGKS, DTGGI, NKVD, DTAGM, and NKWD. The region spanning 352-436 is the KH-like domain; that stretch reads LRVQSSMLND…PIRVIARKRK (85 aa).

The protein belongs to the TRAFAC class TrmE-Era-EngA-EngB-Septin-like GTPase superfamily. EngA (Der) GTPase family. Associates with the 50S ribosomal subunit.

Functionally, GTPase that plays an essential role in the late steps of ribosome biogenesis. This Listeria monocytogenes serotype 4b (strain F2365) protein is GTPase Der.